The primary structure comprises 199 residues: V-set and transmembrane domain-containing protein 5 (199 aa).

The first 27 residues, 1–27, serve as a signal peptide directing secretion; it reads MRPLRCGERTQGIPLGLLAFWVTAARC. Over 28–146 the chain is Extracellular; that stretch reads LQSQGVSLYI…VSEIRYEDLH (119 aa). Positions 35–138 constitute an Ig-like C2-type domain; sequence LYIPQSAINA…QSGTILLRVS (104 aa). 3 N-linked (GlcNAc...) asparagine glycosylation sites follow: Asn43, Asn87, and Asn101. A helical membrane pass occupies residues 147–167; it reads FVAVFFALLAAVAVVLISLMW. Over 168–199 the chain is Cytoplasmic; that stretch reads VCNQCAYKFQRKRRYKLKESTTEEIEMKEVEC. An important for CDC42-dependent filopodia induction region spans residues 169 to 185; that stretch reads CNQCAYKFQRKRRYKLK.

In terms of assembly, can homooligomerize through cis interactions within the same cell membrane. In terms of processing, N-glycosylated. As to expression, highly expressed in the central nervous system (CNS), with the highest expression in thalamus, hippocampus, cerebrum, midbrain and spinal cord. Also highly expressed in stomach, kidney and small intestine.

It is found in the cell membrane. It localises to the cell projection. The protein localises to the dendrite. The protein resides in the axon. Its function is as follows. Cell adhesion-like membrane protein of the central nervous system (CNS) which modulates both the position and complexity of central neurons by altering their membrane morphology and dynamics. Involved in the formation of neuronal dendrites and protrusions including dendritic filopodia. In synaptogenesis, regulates synapse formation by altering dendritic spine morphology and actin distribution. Promotes formation of unstable neuronal spines such as thin and branched types. Regulates neuronal morphogenesis and migration during cortical development in the brain. This Mus musculus (Mouse) protein is V-set and transmembrane domain-containing protein 5.